A 205-amino-acid polypeptide reads, in one-letter code: ATP-dependent Clp protease proteolytic subunit (205 aa).

The Nucleophile role is filled by Ser-101. The active site involves His-126.

This sequence belongs to the peptidase S14 family. As to quaternary structure, component of the chloroplastic Clp protease core complex.

The protein resides in the plastid. Its subcellular location is the chloroplast stroma. It catalyses the reaction Hydrolysis of proteins to small peptides in the presence of ATP and magnesium. alpha-casein is the usual test substrate. In the absence of ATP, only oligopeptides shorter than five residues are hydrolyzed (such as succinyl-Leu-Tyr-|-NHMec, and Leu-Tyr-Leu-|-Tyr-Trp, in which cleavage of the -Tyr-|-Leu- and -Tyr-|-Trp bonds also occurs).. Cleaves peptides in various proteins in a process that requires ATP hydrolysis. Has a chymotrypsin-like activity. Plays a major role in the degradation of misfolded proteins. This is ATP-dependent Clp protease proteolytic subunit from Pinus contorta (Shore pine).